The chain runs to 274 residues: Penicillin-insensitive murein endopeptidase (274 aa).

The N-terminal stretch at 1–19 (MKNTVIALLALLASAGSLA) is a signal peptide. Intrachain disulfides connect C44–C265, C187–C235, and C216–C223. The Zn(2+) site is built by H110, H113, D120, D147, H150, and H211. The disordered stretch occupies residues 224–263 (EDQAPPPPGDGCGAELQSWFEPPKPGSTPPVKKTPPPLPP). The segment covering 245–263 (PPKPGSTPPVKKTPPPLPP) has biased composition (pro residues).

The protein belongs to the peptidase M74 family. As to quaternary structure, dimer. Zn(2+) is required as a cofactor.

The protein resides in the periplasm. Functionally, murein endopeptidase that cleaves the D-alanyl-meso-2,6-diamino-pimelyl amide bond that connects peptidoglycan strands. Likely plays a role in the removal of murein from the sacculus. The sequence is that of Penicillin-insensitive murein endopeptidase from Klebsiella pneumoniae subsp. pneumoniae (strain ATCC 700721 / MGH 78578).